A 652-amino-acid polypeptide reads, in one-letter code: MGRRRAPEGGTLGRALIRQQVQRSRSHRHTDSWLHTSELNDGYDWGRLNLQSVTEQSSLDDFLATAELAGTEFVAEKLNIKFVPPEARTGLLSFEENQRIKKLHEENKQFLCIPRRPKWDQKTSPEELKQAEKDNFLEWRRQLVWLEEEQNLILTPFERNLDFWRQLWRVIERSDIVVQIVDARNPLLFRCEDLECYVKTIDDNKENVILINKADLLTAEQRSAWAEFFKKENVKVIFWSALAEAIKLMGNSKGDVNGDTGEAITAEFENSSCDEAEILHKETEHLSLGEAASSEEDESEYEDCQEEEEDWQTCLEDSSSSDEEACGQDCKEGHTVDSEAQGRNTPQKRQIHNFSHLVSKQELLEVFKQLHSGKKVKDGQLTVGLVGYPNVGKSSTINTILGNKKVSVSATPGHTKHFQTLYVEPGLCLCDCPGLVMPSFVSTKAEMICSGILPIDQMRDHVPPVSLVCQNIPRHVLEATYGIDIIKPREDEDPRRPPTSEELLTAYGCMRGFMTAHGQPDQPRSARYILKDYVNGKLLYCHPPPGRDPVTFQYQHQRLLEKKVNGGEIKLQVVRNKKVYQIENVVDKAFFHQENVRALTKGVQAVMGYKPGSGLVTAAAVSSERGAGKPWKKHGNRNKKEKSRRLYKHLDM.

Phosphoserine is present on serine 93. The CP-type G domain maps to 164–438; that stretch reads WRQLWRVIER…LCDCPGLVMP (275 aa). 212 to 215 serves as a coordination point for GTP; that stretch reads NKAD. Serine 252 is modified (phosphoserine). The interval 288–347 is disordered; it reads LGEAASSEEDESEYEDCQEEEEDWQTCLEDSSSSDEEACGQDCKEGHTVDSEAQGRNTPQ. A compositionally biased stretch (acidic residues) spans 293-311; it reads SSEEDESEYEDCQEEEEDW. Residues 387 to 394 and 431 to 434 contribute to the GTP site; these read GYPNVGKS and DCPG. Residues 625 to 652 are disordered; the sequence is RGAGKPWKKHGNRNKKEKSRRLYKHLDM. Basic residues predominate over residues 630-652; that stretch reads PWKKHGNRNKKEKSRRLYKHLDM.

This sequence belongs to the TRAFAC class YlqF/YawG GTPase family. LSG1 subfamily.

It is found in the cytoplasm. The protein resides in the endoplasmic reticulum. The protein localises to the nucleus. It localises to the cajal body. The catalysed reaction is GTP + H2O = GDP + phosphate + H(+). Functions as a GTPase. May act by mediating the release of NMD3 from the 60S ribosomal subunit after export into the cytoplasm during the 60S ribosomal subunit maturation. This is Large subunit GTPase 1 homolog from Bos taurus (Bovine).